The primary structure comprises 386 residues: L-lactate dehydrogenase (386 aa).

An FMN hydroxy acid dehydrogenase domain is found at 1-380 (MIISAASDYR…SGDALSRVTR (380 aa)). Tyrosine 24 contributes to the substrate binding site. Residues serine 106 and glutamine 127 each coordinate FMN. Residue tyrosine 129 participates in substrate binding. Threonine 155 lines the FMN pocket. Arginine 164 serves as a coordination point for substrate. Lysine 251 contacts FMN. Histidine 275 acts as the Proton acceptor in catalysis. Arginine 278 contacts substrate. FMN is bound at residue 306-330 (DSGIRSGLDVVRMLALGADAVLLGR).

Belongs to the FMN-dependent alpha-hydroxy acid dehydrogenase family. It depends on FMN as a cofactor.

It localises to the cell inner membrane. It catalyses the reaction (S)-lactate + A = pyruvate + AH2. Functionally, catalyzes the conversion of L-lactate to pyruvate. Is coupled to the respiratory chain. This chain is L-lactate dehydrogenase, found in Xanthomonas campestris pv. campestris (strain B100).